A 201-amino-acid chain; its full sequence is Small ribosomal subunit protein uS4c (201 aa).

A disordered region spans residues 17–44 (ALPGLTNKKPRTGSDLRNQSRSGKKSQY). Residues 89–149 (MRLDNILFRL…DEQKSRALIQ (61 aa)) enclose the S4 RNA-binding domain.

The protein belongs to the universal ribosomal protein uS4 family. Part of the 30S ribosomal subunit. Contacts protein S5. The interaction surface between S4 and S5 is involved in control of translational fidelity.

It is found in the plastid. The protein resides in the chloroplast. One of the primary rRNA binding proteins, it binds directly to 16S rRNA where it nucleates assembly of the body of the 30S subunit. Functionally, with S5 and S12 plays an important role in translational accuracy. The sequence is that of Small ribosomal subunit protein uS4c (rps4) from Solanum bulbocastanum (Wild potato).